Consider the following 38-residue polypeptide: Large ribosomal subunit protein bL36 (38 aa).

Belongs to the bacterial ribosomal protein bL36 family.

The polypeptide is Large ribosomal subunit protein bL36 (Roseiflexus castenholzii (strain DSM 13941 / HLO8)).